The sequence spans 255 residues: Pyrroloquinoline-quinone synthase (255 aa).

The protein belongs to the PqqC family.

It carries out the reaction 6-(2-amino-2-carboxyethyl)-7,8-dioxo-1,2,3,4,7,8-hexahydroquinoline-2,4-dicarboxylate + 3 O2 = pyrroloquinoline quinone + 2 H2O2 + 2 H2O + H(+). Its pathway is cofactor biosynthesis; pyrroloquinoline quinone biosynthesis. Ring cyclization and eight-electron oxidation of 3a-(2-amino-2-carboxyethyl)-4,5-dioxo-4,5,6,7,8,9-hexahydroquinoline-7,9-dicarboxylic-acid to PQQ. In Cereibacter sphaeroides (strain ATCC 17029 / ATH 2.4.9) (Rhodobacter sphaeroides), this protein is Pyrroloquinoline-quinone synthase.